The sequence spans 274 residues: Aspartate/glutamate leucyltransferase (274 aa).

Belongs to the R-transferase family. Bpt subfamily.

The protein resides in the cytoplasm. The enzyme catalyses N-terminal L-glutamyl-[protein] + L-leucyl-tRNA(Leu) = N-terminal L-leucyl-L-glutamyl-[protein] + tRNA(Leu) + H(+). It carries out the reaction N-terminal L-aspartyl-[protein] + L-leucyl-tRNA(Leu) = N-terminal L-leucyl-L-aspartyl-[protein] + tRNA(Leu) + H(+). In terms of biological role, functions in the N-end rule pathway of protein degradation where it conjugates Leu from its aminoacyl-tRNA to the N-termini of proteins containing an N-terminal aspartate or glutamate. This chain is Aspartate/glutamate leucyltransferase, found in Ruegeria sp. (strain TM1040) (Silicibacter sp.).